A 111-amino-acid polypeptide reads, in one-letter code: Nucleoid-associated protein VF_1686 (111 aa).

Disordered regions lie at residues Met1–Gln23 and Thr89–Phe111.

The protein belongs to the YbaB/EbfC family. As to quaternary structure, homodimer.

It localises to the cytoplasm. Its subcellular location is the nucleoid. In terms of biological role, binds to DNA and alters its conformation. May be involved in regulation of gene expression, nucleoid organization and DNA protection. This chain is Nucleoid-associated protein VF_1686, found in Aliivibrio fischeri (strain ATCC 700601 / ES114) (Vibrio fischeri).